The following is a 480-amino-acid chain: Acyl-coenzyme A synthetase ACSM6, mitochondrial (480 aa).

The N-terminal 21 residues, 1 to 21 (MLGRFQPFSLVRSFRLGFEAC), are a transit peptide targeting the mitochondrion. Residues 226-234 (TKGTTGAPK), 366-371 (EGYGQT), Asp-453, and Arg-468 each bind ATP.

The protein belongs to the ATP-dependent AMP-binding enzyme family. Monomer. Mg(2+) serves as cofactor. Mn(2+) is required as a cofactor.

Its subcellular location is the mitochondrion. It carries out the reaction a medium-chain fatty acid + ATP + CoA = a medium-chain fatty acyl-CoA + AMP + diphosphate. Functionally, catalyzes the activation of fatty acids by CoA to produce an acyl-CoA, the first step in fatty acid metabolism. The protein is Acyl-coenzyme A synthetase ACSM6, mitochondrial (ACSM6) of Homo sapiens (Human).